A 363-amino-acid chain; its full sequence is Biotin synthase (363 aa).

The 229-residue stretch at Asn-40–Arg-268 folds into the Radical SAM core domain. The [4Fe-4S] cluster site is built by Cys-55, Cys-59, and Cys-62. Residues Cys-99, Cys-131, Cys-191, and Arg-263 each contribute to the [2Fe-2S] cluster site.

Belongs to the radical SAM superfamily. Biotin synthase family. Homodimer. Requires [4Fe-4S] cluster as cofactor. [2Fe-2S] cluster is required as a cofactor.

The enzyme catalyses (4R,5S)-dethiobiotin + (sulfur carrier)-SH + 2 reduced [2Fe-2S]-[ferredoxin] + 2 S-adenosyl-L-methionine = (sulfur carrier)-H + biotin + 2 5'-deoxyadenosine + 2 L-methionine + 2 oxidized [2Fe-2S]-[ferredoxin]. It functions in the pathway cofactor biosynthesis; biotin biosynthesis; biotin from 7,8-diaminononanoate: step 2/2. Catalyzes the conversion of dethiobiotin (DTB) to biotin by the insertion of a sulfur atom into dethiobiotin via a radical-based mechanism. This Flavobacterium johnsoniae (strain ATCC 17061 / DSM 2064 / JCM 8514 / BCRC 14874 / CCUG 350202 / NBRC 14942 / NCIMB 11054 / UW101) (Cytophaga johnsonae) protein is Biotin synthase.